Reading from the N-terminus, the 356-residue chain is Phosphoribosylformylglycinamidine cyclo-ligase (356 aa).

The protein belongs to the AIR synthase family.

It localises to the cytoplasm. The catalysed reaction is 2-formamido-N(1)-(5-O-phospho-beta-D-ribosyl)acetamidine + ATP = 5-amino-1-(5-phospho-beta-D-ribosyl)imidazole + ADP + phosphate + H(+). The protein operates within purine metabolism; IMP biosynthesis via de novo pathway; 5-amino-1-(5-phospho-D-ribosyl)imidazole from N(2)-formyl-N(1)-(5-phospho-D-ribosyl)glycinamide: step 2/2. This Desulfotalea psychrophila (strain LSv54 / DSM 12343) protein is Phosphoribosylformylglycinamidine cyclo-ligase.